The following is a 484-amino-acid chain: Cytochrome P450 monooxygenase poxD (484 aa).

Residues 2–24 form a helical membrane-spanning segment; the sequence is VSPVVLATTAMIVVFLLAQRYLS. C429 serves as a coordination point for heme.

It belongs to the cytochrome P450 family. Heme serves as cofactor.

The protein resides in the membrane. It functions in the pathway secondary metabolite biosynthesis. Its function is as follows. Cytochrome P450 monooxygenase; part of the gene cluster that mediates the biosynthesis of oxaleimides, cytotoxic compounds containing an unusual disubstituted succinimide moiety. The first step of the pathway is provided by the HR-PKS poxF that serves in a new mode of collaborative biosynthesis with the PKS-NRPS poxE, by providing the olefin containing amino acid substrate via the synthesis of an ACP-bound dec-4-enoate. The cytochrome P450 monooxygenase poxM-catalyzed oxidation at the alpha-position creates the enzyme-bound 2-hydroxydec-4-enoyl-ACP thioester, which may be prone to spontaneous hydrolysis to yield 2-hydroxydec-4-enoic acid due to increased electrophilicity of the carbonyl. 2-hydroxydec-4-enoic acid can then be further oxidized by poxM to yield the alpha-ketoacid 2-oxodec-4-enoicacid, which is reductively aminated by the aminotransferase poxL to yield (S,E)-2-aminodec-4-enoic acid. The Hybrid PKS-NRPS synthetase poxE then performs condensation between the octaketide product of its PKS modules and the amino group of (S,E)-2-aminodec-4-enoic acid which is activated and incorporated by the adenylation domain. The resulting aminoacyl product can be cyclized by the Diels-Alderase PoxQ and reductively released by the reductive (R) domain of poxE to yield an aldehyde intermediate. The released aldehyde is then substrate for a Knoevenagel condensation by the hydrolyase poxO followed by an oxidation at the 5-position of the pyrrolidone ring. The presence of the olefin from the amino acid building block allows for migration of the substituted allyl group to occur. This allylic transposition reaction takes place in a conjugate addition, semipinacol-like fashion to yield a succinimide intermediate. Iterative two-electron oxidations of the C7 methyl of the succinimide intermediate to the carboxylic acid can be catalyzed by one of two remaining cytochrome P450 monooxygenasess poxC or poxD to yield oxaleimide A. Subsequent oxidation yields the maleimide scaffold oxaleimide I. Both oxaleimide A and oxaleimide I can undergo oxidative modifications in the decalin ring to yield the series of products oxaleimides B to H. This is Cytochrome P450 monooxygenase poxD from Penicillium oxalicum.